Here is a 105-residue protein sequence, read N- to C-terminus: Large ribosomal subunit protein uL24 (105 aa).

Belongs to the universal ribosomal protein uL24 family. In terms of assembly, part of the 50S ribosomal subunit.

Functionally, one of two assembly initiator proteins, it binds directly to the 5'-end of the 23S rRNA, where it nucleates assembly of the 50S subunit. One of the proteins that surrounds the polypeptide exit tunnel on the outside of the subunit. The chain is Large ribosomal subunit protein uL24 from Xanthomonas campestris pv. campestris (strain 8004).